Reading from the N-terminus, the 425-residue chain is UDP-N-acetylglucosamine 1-carboxyvinyltransferase (425 aa).

Residue 24-25 coordinates phosphoenolpyruvate; it reads KN. Arg-95 is a UDP-N-acetyl-alpha-D-glucosamine binding site. Cys-119 (proton donor) is an active-site residue. The residue at position 119 (Cys-119) is a 2-(S-cysteinyl)pyruvic acid O-phosphothioketal. UDP-N-acetyl-alpha-D-glucosamine contacts are provided by residues 124–128, Asp-308, and Val-330; that span reads RPVDQ.

This sequence belongs to the EPSP synthase family. MurA subfamily.

It localises to the cytoplasm. The catalysed reaction is phosphoenolpyruvate + UDP-N-acetyl-alpha-D-glucosamine = UDP-N-acetyl-3-O-(1-carboxyvinyl)-alpha-D-glucosamine + phosphate. It participates in cell wall biogenesis; peptidoglycan biosynthesis. Functionally, cell wall formation. Adds enolpyruvyl to UDP-N-acetylglucosamine. The chain is UDP-N-acetylglucosamine 1-carboxyvinyltransferase from Deinococcus deserti (strain DSM 17065 / CIP 109153 / LMG 22923 / VCD115).